The primary structure comprises 451 residues: Phosphoglucosamine mutase (451 aa).

Residue S102 is the Phosphoserine intermediate of the active site. The Mg(2+) site is built by S102, D243, D245, and D247. S102 is modified (phosphoserine).

The protein belongs to the phosphohexose mutase family. Requires Mg(2+) as cofactor. Post-translationally, activated by phosphorylation.

The enzyme catalyses alpha-D-glucosamine 1-phosphate = D-glucosamine 6-phosphate. Its function is as follows. Catalyzes the conversion of glucosamine-6-phosphate to glucosamine-1-phosphate. This chain is Phosphoglucosamine mutase, found in Brucella anthropi (strain ATCC 49188 / DSM 6882 / CCUG 24695 / JCM 21032 / LMG 3331 / NBRC 15819 / NCTC 12168 / Alc 37) (Ochrobactrum anthropi).